The following is a 474-amino-acid chain: Methylenetetrahydrofolate--tRNA-(uracil-5-)-methyltransferase TrmFO (474 aa).

15–20 (GAGLAG) provides a ligand contact to FAD. The tract at residues 453-474 (PLLPTAPDTTGAAGEETTQAES) is disordered.

This sequence belongs to the MnmG family. TrmFO subfamily. FAD is required as a cofactor.

The protein localises to the cytoplasm. The catalysed reaction is uridine(54) in tRNA + (6R)-5,10-methylene-5,6,7,8-tetrahydrofolate + NADH + H(+) = 5-methyluridine(54) in tRNA + (6S)-5,6,7,8-tetrahydrofolate + NAD(+). It catalyses the reaction uridine(54) in tRNA + (6R)-5,10-methylene-5,6,7,8-tetrahydrofolate + NADPH + H(+) = 5-methyluridine(54) in tRNA + (6S)-5,6,7,8-tetrahydrofolate + NADP(+). In terms of biological role, catalyzes the folate-dependent formation of 5-methyl-uridine at position 54 (M-5-U54) in all tRNAs. This is Methylenetetrahydrofolate--tRNA-(uracil-5-)-methyltransferase TrmFO from Nitratidesulfovibrio vulgaris (strain ATCC 29579 / DSM 644 / CCUG 34227 / NCIMB 8303 / VKM B-1760 / Hildenborough) (Desulfovibrio vulgaris).